The sequence spans 469 residues: Uronate isomerase (469 aa).

This sequence belongs to the metallo-dependent hydrolases superfamily. Uronate isomerase family.

It carries out the reaction D-glucuronate = D-fructuronate. It catalyses the reaction aldehydo-D-galacturonate = keto-D-tagaturonate. Its pathway is carbohydrate metabolism; pentose and glucuronate interconversion. The polypeptide is Uronate isomerase (Pectobacterium atrosepticum (strain SCRI 1043 / ATCC BAA-672) (Erwinia carotovora subsp. atroseptica)).